A 361-amino-acid chain; its full sequence is Replication-associated protein (361 aa).

Residues 8 to 116 (RINAKNYFLT…DGDVLDHGVF (109 aa)) form the CRESS-DNA virus Rep endonuclease domain. Positions 15 to 18 (FLTY) match the RCR-1 motif. Residues glutamate 49, histidine 57, and histidine 59 each contribute to the a divalent metal cation site. Residues 57–59 (HLH) carry the RCR-2 motif. The active-site For DNA cleavage activity is the tyrosine 103. Residues 103-106 (YMEK) carry the RCR-3 motif. Aspartate 107 lines the a divalent metal cation pocket. The tract at residues 143–153 (KASALNILREK) is binding to RBR1. Residues 156–176 (KDFVLQFHNLNSNLDRIFTPP) are oligomerization. Residue 221–228 (GDSRTGKT) coordinates ATP.

The protein belongs to the geminiviridae Rep protein family. As to quaternary structure, homooligomer. Interacts with the replication enhancer protein (REn). Interacts with host retinoblastoma-related protein 1 (RBR1), and may thereby induce the transcription of host replicative enzymes even if the cell is not dividing anymore. Interacts with host PCNA. Interacts with host SCE1 protein. It depends on Mg(2+) as a cofactor. The cofactor is Mn(2+).

The protein localises to the host nucleus. In terms of biological role, essential for the replication of viral ssDNA. The closed circular ssDNA genome is first converted to a superhelical dsDNA. Rep binds a specific region at the genome origin of replication. It introduces an endonucleolytic nick within the conserved sequence 5'-TAATATTAC-3' in the intergenic region of the genome present in all geminiviruses, thereby initiating the rolling circle replication (RCR). Following cleavage, binds covalently to the 5'-phosphate of DNA as a tyrosyl ester. The cleavage gives rise to a free 3'-OH that serves as a primer for the cellular DNA polymerase. The polymerase synthesizes the (+) strand DNA by rolling circle mechanism. After one round of replication, a Rep-catalyzed nucleotidyl transfer reaction releases a circular single-stranded virus genome, thereby terminating the replication. Displays origin-specific DNA cleavage, nucleotidyl transferase, ATPase and helicase activities. This is Replication-associated protein from Tomato yellow leaf curl China virus (TYLCCNV).